The primary structure comprises 288 residues: Cyclic UMP-AMP synthase (288 aa).

Positions Met-1–Thr-23 are disordered. A UTP-binding site is contributed by Gln-46. Gln-46–Ser-48 serves as a coordination point for ATP. Mg(2+) is bound by residues Asp-60 and Asp-62. Residues Asp-62 and Arg-116–Lys-120 contribute to the UTP site. Asp-129 provides a ligand contact to Mg(2+). Asn-166 serves as a coordination point for UTP. ATP-binding residues include Lys-194, Ser-212, and Glu-265.

It belongs to the CD-NTase family. E01 subfamily. Mg(2+) serves as cofactor.

It carries out the reaction UTP + ATP = 3',3'-cUAMP + 2 diphosphate. Cyclic nucleotide synthase (second messenger synthase) of a CBASS antivirus system. CBASS (cyclic oligonucleotide-based antiphage signaling system) provides immunity against bacteriophage. The CD-NTase protein synthesizes cyclic nucleotides in response to infection; these serve as specific second messenger signals. The signals activate a diverse range of effectors, leading to bacterial cell death and thus abortive phage infection. A type I-B(UU) CBASS system. Functionally, cyclic dinucleotide synthase that catalyzes the synthesis of 3'3'-cyclic UMP-AMP (cUMP-AMP) from UTP and ATP, a second messenger for cell signal transduction. The polypeptide is Cyclic UMP-AMP synthase (Rhodothermus marinus (strain SG0.5JP17-172)).